We begin with the raw amino-acid sequence, 392 residues long: Phosphoglycerate kinase (392 aa).

Substrate is bound by residues 21-23, arginine 36, 59-62, arginine 114, and arginine 147; these read DLN and HLGR. ATP is bound by residues lysine 198, glutamate 320, and 346-349; that span reads GGDT.

This sequence belongs to the phosphoglycerate kinase family. As to quaternary structure, monomer.

The protein resides in the cytoplasm. It carries out the reaction (2R)-3-phosphoglycerate + ATP = (2R)-3-phospho-glyceroyl phosphate + ADP. It functions in the pathway carbohydrate degradation; glycolysis; pyruvate from D-glyceraldehyde 3-phosphate: step 2/5. The sequence is that of Phosphoglycerate kinase from Nitrosomonas eutropha (strain DSM 101675 / C91 / Nm57).